The sequence spans 419 residues: UDP-N-acetylglucosamine 1-carboxyvinyltransferase (419 aa).

Position 22-23 (22-23 (KN)) interacts with phosphoenolpyruvate. Position 93 (arginine 93) interacts with UDP-N-acetyl-alpha-D-glucosamine. Cysteine 117 serves as the catalytic Proton donor. 2-(S-cysteinyl)pyruvic acid O-phosphothioketal is present on cysteine 117. Residues aspartate 306 and isoleucine 328 each coordinate UDP-N-acetyl-alpha-D-glucosamine.

It belongs to the EPSP synthase family. MurA subfamily.

The protein localises to the cytoplasm. The catalysed reaction is phosphoenolpyruvate + UDP-N-acetyl-alpha-D-glucosamine = UDP-N-acetyl-3-O-(1-carboxyvinyl)-alpha-D-glucosamine + phosphate. It participates in cell wall biogenesis; peptidoglycan biosynthesis. In terms of biological role, cell wall formation. Adds enolpyruvyl to UDP-N-acetylglucosamine. This chain is UDP-N-acetylglucosamine 1-carboxyvinyltransferase, found in Ruthia magnifica subsp. Calyptogena magnifica.